The primary structure comprises 344 residues: Peroxidase 36 (344 aa).

A signal peptide spans 1 to 28 (MNTKTVKSMAGIVLSQISLVALFPLCIC). 4 cysteine pairs are disulfide-bonded: cysteine 50/cysteine 130, cysteine 83/cysteine 88, cysteine 136/cysteine 337, and cysteine 215/cysteine 247. Histidine 81 acts as the Proton acceptor in catalysis. Ca(2+) contacts are provided by aspartate 82, valine 85, glycine 87, aspartate 89, and serine 91. Proline 178 contributes to the substrate binding site. Heme b is bound at residue histidine 208. A Ca(2+)-binding site is contributed by threonine 209. Asparagine 224 carries N-linked (GlcNAc...) asparagine glycosylation. Residues aspartate 260, threonine 263, and aspartate 268 each coordinate Ca(2+).

The protein belongs to the peroxidase family. Classical plant (class III) peroxidase subfamily. The cofactor is heme b. It depends on Ca(2+) as a cofactor.

It is found in the secreted. It catalyses the reaction 2 a phenolic donor + H2O2 = 2 a phenolic radical donor + 2 H2O. In terms of biological role, removal of H(2)O(2), oxidation of toxic reductants, biosynthesis and degradation of lignin, suberization, auxin catabolism, response to environmental stresses such as wounding, pathogen attack and oxidative stress. These functions might be dependent on each isozyme/isoform in each plant tissue. The polypeptide is Peroxidase 36 (PER36) (Arabidopsis thaliana (Mouse-ear cress)).